A 158-amino-acid polypeptide reads, in one-letter code: Snaclec crotocetin-1 (158 aa).

Residues 1 to 23 form the signal peptide; it reads MGRFIFVSFGLLVVFLSLSGTGA. 3 cysteine pairs are disulfide-bonded: Cys27–Cys38, Cys55–Cys152, and Cys127–Cys144. Residues 34–153 enclose the C-type lectin domain; the sequence is YDQYCYRVIK…CEEKNLFVCK (120 aa).

Belongs to the snaclec family. Heterodimer; disulfide-linked. In terms of tissue distribution, expressed by the venom gland.

The protein resides in the secreted. In terms of biological role, interferes with one step of hemostasis (modulation of platelet aggregation, or coagulation cascade, for example). This Crotalus durissus terrificus (South American rattlesnake) protein is Snaclec crotocetin-1.